The primary structure comprises 530 residues: ATP synthase subunit alpha (530 aa).

An ATP-binding site is contributed by 172–179 (GDRQTGKT).

Belongs to the ATPase alpha/beta chains family. As to quaternary structure, F-type ATPases have 2 components, CF(1) - the catalytic core - and CF(0) - the membrane proton channel. CF(1) has five subunits: alpha(3), beta(3), gamma(1), delta(1), epsilon(1). CF(0) has three main subunits: a(1), b(2) and c(9-12). The alpha and beta chains form an alternating ring which encloses part of the gamma chain. CF(1) is attached to CF(0) by a central stalk formed by the gamma and epsilon chains, while a peripheral stalk is formed by the delta and b chains.

It localises to the cell inner membrane. The enzyme catalyses ATP + H2O + 4 H(+)(in) = ADP + phosphate + 5 H(+)(out). In terms of biological role, produces ATP from ADP in the presence of a proton gradient across the membrane. The alpha chain is a regulatory subunit. This is ATP synthase subunit alpha from Phocaeicola vulgatus (strain ATCC 8482 / DSM 1447 / JCM 5826 / CCUG 4940 / NBRC 14291 / NCTC 11154) (Bacteroides vulgatus).